Reading from the N-terminus, the 135-residue chain is Large ribosomal subunit protein bL17 (135 aa).

This sequence belongs to the bacterial ribosomal protein bL17 family. In terms of assembly, part of the 50S ribosomal subunit. Contacts protein L32.

The protein is Large ribosomal subunit protein bL17 of Listeria welshimeri serovar 6b (strain ATCC 35897 / DSM 20650 / CCUG 15529 / CIP 8149 / NCTC 11857 / SLCC 5334 / V8).